We begin with the raw amino-acid sequence, 342 residues long: Alternative oxidase, mitochondrial (342 aa).

A mitochondrion-targeting transit peptide spans 1-20 (MIKTYQYRSILNSRNVGIRF). A helical transmembrane segment spans residues 135 to 155 (LTRCIFLESVAGVPGMVAAFI). The Fe cation site is built by Glu142, Glu181, and His184. The helical transmembrane segment at 200-220 (FIIYMGQGVFANLFFLVYLIK) threads the bilayer. Fe cation-binding residues include Glu232, Glu287, and His290. Composition is skewed to basic and acidic residues over residues 308-321 (PFALKVEDVPKEQQ) and 330-342 (PHPEGWNREQMRL). A disordered region spans residues 308–342 (PFALKVEDVPKEQQPDEYSLKTPHPEGWNREQMRL).

This sequence belongs to the alternative oxidase family. Homodimer; disulfide-linked. The cofactor is Fe cation.

It is found in the mitochondrion inner membrane. Catalyzes cyanide-resistant oxygen consumption. May increase respiration when the cytochrome respiratory pathway is restricted, or in response to low temperatures. The protein is Alternative oxidase, mitochondrial (AOX1) of Wickerhamomyces anomalus (Yeast).